A 394-amino-acid polypeptide reads, in one-letter code: Argininosuccinate synthase (394 aa).

ATP is bound by residues 7 to 15 (AYSGGLDTS) and alanine 35. Residue tyrosine 85 coordinates L-citrulline. Glycine 115 is an ATP binding site. Residues threonine 117, asparagine 121, and aspartate 122 each contribute to the L-aspartate site. Position 121 (asparagine 121) interacts with L-citrulline. 5 residues coordinate L-citrulline: arginine 125, serine 174, serine 183, glutamate 258, and tyrosine 270.

Belongs to the argininosuccinate synthase family. Type 1 subfamily. Homotetramer.

It localises to the cytoplasm. The enzyme catalyses L-citrulline + L-aspartate + ATP = 2-(N(omega)-L-arginino)succinate + AMP + diphosphate + H(+). It functions in the pathway amino-acid biosynthesis; L-arginine biosynthesis; L-arginine from L-ornithine and carbamoyl phosphate: step 2/3. The protein is Argininosuccinate synthase of Methanopyrus kandleri (strain AV19 / DSM 6324 / JCM 9639 / NBRC 100938).